The primary structure comprises 155 residues: Ribonuclease H (155 aa).

One can recognise an RNase H type-1 domain in the interval 1–142; sequence MLKQVEIFTD…CDELARNAAG (142 aa). Mg(2+) is bound by residues D10, E48, D70, and D134.

The protein belongs to the RNase H family. As to quaternary structure, monomer. Mg(2+) serves as cofactor.

The protein localises to the cytoplasm. It catalyses the reaction Endonucleolytic cleavage to 5'-phosphomonoester.. Functionally, endonuclease that specifically degrades the RNA of RNA-DNA hybrids. The chain is Ribonuclease H from Erwinia tasmaniensis (strain DSM 17950 / CFBP 7177 / CIP 109463 / NCPPB 4357 / Et1/99).